The sequence spans 324 residues: Carbamate kinase (324 aa).

It belongs to the carbamate kinase family.

The protein localises to the cytoplasm. The catalysed reaction is hydrogencarbonate + NH4(+) + ATP = carbamoyl phosphate + ADP + H2O + H(+). It functions in the pathway amino-acid degradation; L-arginine degradation via ADI pathway. The chain is Carbamate kinase from Rhizobium meliloti (strain 1021) (Ensifer meliloti).